Here is a 263-residue protein sequence, read N- to C-terminus: Triosephosphate isomerase (263 aa).

10–12 (NWK) is a substrate binding site. Histidine 104 acts as the Electrophile in catalysis. The active-site Proton acceptor is glutamate 176. Residues glycine 182, serine 221, and 242-243 (GG) contribute to the substrate site.

It belongs to the triosephosphate isomerase family. Homodimer.

The protein localises to the cytoplasm. The catalysed reaction is D-glyceraldehyde 3-phosphate = dihydroxyacetone phosphate. Its pathway is carbohydrate biosynthesis; gluconeogenesis. The protein operates within carbohydrate degradation; glycolysis; D-glyceraldehyde 3-phosphate from glycerone phosphate: step 1/1. Its function is as follows. Involved in the gluconeogenesis. Catalyzes stereospecifically the conversion of dihydroxyacetone phosphate (DHAP) to D-glyceraldehyde-3-phosphate (G3P). The sequence is that of Triosephosphate isomerase from Haemophilus influenzae (strain PittEE).